Consider the following 202-residue polypeptide: LexA repressor (202 aa).

A DNA-binding region (H-T-H motif) is located at residues 28–48; sequence QQEIARAFGFRSLGTVRNYLV. Residues S120 and K157 each act as for autocatalytic cleavage activity in the active site.

Belongs to the peptidase S24 family. As to quaternary structure, homodimer.

It catalyses the reaction Hydrolysis of Ala-|-Gly bond in repressor LexA.. Its function is as follows. Represses a number of genes involved in the response to DNA damage (SOS response), including recA and lexA. In the presence of single-stranded DNA, RecA interacts with LexA causing an autocatalytic cleavage which disrupts the DNA-binding part of LexA, leading to derepression of the SOS regulon and eventually DNA repair. This chain is LexA repressor, found in Syntrophotalea carbinolica (strain DSM 2380 / NBRC 103641 / GraBd1) (Pelobacter carbinolicus).